A 553-amino-acid polypeptide reads, in one-letter code: Putative transport protein YidE (553 aa).

5 helical membrane-spanning segments follow: residues 4–24 (IALT…IGNI), 28–48 (GVGF…HFVD), 65–85 (FGLI…FFAS), 95–115 (LFAV…HKIF), and 158–178 (MSYA…MWLM). 2 RCK C-terminal domains span residues 192–276 (KHES…VIGK) and 279–361 (DTSL…VVGN). 6 helical membrane-spanning segments follow: residues 371 to 391 (MLPV…PLFV), 393 to 413 (GFPV…ALIL), 437 to 457 (LGIV…FVDT), 464 to 484 (LSWI…VGLL), 493 to 513 (YLTL…LAFA), and 533 to 553 (LVMF…WGMG).

This sequence belongs to the AAE transporter (TC 2.A.81) family. YidE subfamily.

The protein resides in the cell membrane. In Salmonella heidelberg (strain SL476), this protein is Putative transport protein YidE.